Here is a 313-residue protein sequence, read N- to C-terminus: Glutathione synthetase (313 aa).

The 185-residue stretch at 125–309 (KIFVTEFADL…IASLFWDAVE (185 aa)) folds into the ATP-grasp domain. 151 to 207 (RKEFGDIIVKPLYGNGGAGIFHLHEADRNLASLLEMFGQLFREPYIVQRYLKDVRKG) contacts ATP. Residues E280 and N282 each coordinate Mg(2+).

The protein belongs to the prokaryotic GSH synthase family. Mg(2+) serves as cofactor. Mn(2+) is required as a cofactor.

It carries out the reaction gamma-L-glutamyl-L-cysteine + glycine + ATP = glutathione + ADP + phosphate + H(+). Its pathway is sulfur metabolism; glutathione biosynthesis; glutathione from L-cysteine and L-glutamate: step 2/2. This is Glutathione synthetase from Mesorhizobium japonicum (strain LMG 29417 / CECT 9101 / MAFF 303099) (Mesorhizobium loti (strain MAFF 303099)).